We begin with the raw amino-acid sequence, 78 residues long: Sec-independent protein translocase protein TatA (78 aa).

Residues 1-21 (MGSLSIWHWIVVIAVVLLLFG) traverse the membrane as a helical segment. Residues 43–60 (LQDDEKTAEKSEPVKSID) show a composition bias toward basic and acidic residues. A disordered region spans residues 43–78 (LQDDEKTAEKSEPVKSIDHTSTPGATNRTDVGSKAV). The span at 61–72 (HTSTPGATNRTD) shows a compositional bias: polar residues.

It belongs to the TatA/E family. In terms of assembly, the Tat system comprises two distinct complexes: a TatABC complex, containing multiple copies of TatA, TatB and TatC subunits, and a separate TatA complex, containing only TatA subunits. Substrates initially bind to the TatABC complex, which probably triggers association of the separate TatA complex to form the active translocon.

It localises to the cell inner membrane. Functionally, part of the twin-arginine translocation (Tat) system that transports large folded proteins containing a characteristic twin-arginine motif in their signal peptide across membranes. TatA could form the protein-conducting channel of the Tat system. The polypeptide is Sec-independent protein translocase protein TatA (Rhodopseudomonas palustris (strain ATCC BAA-98 / CGA009)).